We begin with the raw amino-acid sequence, 280 residues long: Para-Rep C2 (280 aa).

The CRESS-DNA virus Rep endonuclease domain maps to 1-97 (MARRYCFTLN…ETLISEIGIP (97 aa)). The short motif at 6 to 9 (CFTL) is the RCR-1 element. 2 residues coordinate a divalent metal cation: Glu37 and His45. Positions 45–47 (HLQ) match the RCR-2 motif. Residues 54–75 (NKIRLGGLKKKFGNRAHWEIAR) carry the Nuclear localization signal motif. Catalysis depends on Tyr84, which acts as the For DNA cleavage activity. An RCR-3 motif is present at residues 84-87 (YCCK). Positions 97-103 (PVMKGSN) match the Nuclear localization signal motif. ATP is bound at residue 172–180 (GSDGGEGKT).

It belongs to the nanoviridea/circoviridae replication-associated protein family. Homooligomer (Potential). Rep binds to repeated DNA motifs (iterons). Mg(2+) serves as cofactor. Mn(2+) is required as a cofactor.

The protein localises to the host nucleus. It catalyses the reaction ATP + H2O = ADP + phosphate + H(+). In terms of biological role, initiates and terminates the replication only of its own subviral DNA molecule. The closed circular ssDNA genome is first converted to a superhelical dsDNA. Rep binds a specific hairpin at the genome origin of replication. Introduces an endonucleolytic nick within the intergenic region of the genome, thereby initiating the rolling circle replication (RCR). Following cleavage, binds covalently to the 5'-phosphate of DNA as a tyrosyl ester. The cleavage gives rise to a free 3'-OH that serves as a primer for the cellular DNA polymerase. The polymerase synthesizes the (+) strand DNA by rolling circle mechanism. After one round of replication, a Rep-catalyzed nucleotidyl transfer reaction releases a circular single-stranded virus genome, thereby terminating the replication. Displays origin-specific DNA cleavage, nucleotidyl transferase, ATPase and helicase activities. The protein is Para-Rep C2 (C2) of Subterranean clover stunt C2 alphasatellite (SCSC2A).